A 572-amino-acid chain; its full sequence is O-fucosyltransferase 16 (572 aa).

The chain crosses the membrane as a helical; Signal-anchor for type II membrane protein span at residues L17–F37. 2 N-linked (GlcNAc...) asparagine glycosylation sites follow: N92 and N136. H274 to R276 contacts substrate. Residues N446 and N506 are each glycosylated (N-linked (GlcNAc...) asparagine). The segment at E498–D572 is disordered. The span at D521–D541 shows a compositional bias: acidic residues. N-linked (GlcNAc...) asparagine glycosylation is present at N549. A compositionally biased stretch (acidic residues) spans D554 to L566.

This sequence belongs to the glycosyltransferase GT106 family.

The protein resides in the membrane. The protein operates within glycan metabolism. This is O-fucosyltransferase 16 from Arabidopsis thaliana (Mouse-ear cress).